Here is a 93-residue protein sequence, read N- to C-terminus: Hematopoietic cell signal transducer (93 aa).

A signal peptide spans 1 to 18 (MIHLGHILFLLLLPVAAA). Over 19-48 (QTTPGERSSLPAFYPGTSGSCSGCGSLSLP) the chain is Extracellular. Residues 49 to 69 (LLAGLVAADAVASLLIVGAVF) traverse the membrane as a helical segment. Topologically, residues 70–93 (LCARPRRSPAQEDGKVYINMPGRG) are cytoplasmic. Tyrosine 86 is modified (phosphotyrosine). The GRB2 binding site stretch occupies residues 86-88 (YIN). The PIK3R1 binding site stretch occupies residues 86-89 (YINM).

It belongs to the DAP10 family. In terms of assembly, interacts with CLEC5A. Forms an CLEC5A/TYROBP/HCST trimolecular complex depending almost solely on TYROBP. Homodimer; Disulfide-linked. Heterohexamer composed of four subunits of HCST/DAP10 and two subunits of KLRK1. Interacts (via transmembrane domain) with KLRK1 (via transmembrane domain); the interaction is required for KLRK1 NK cell surface and induces NK cell-mediated cytotoxicity. Interacts with PIK3R1 and GRB2. Interacts with CD300H. Post-translationally, phosphorylated; PIK3R1 and GRB2 associate specifically with tyrosine-phosphorylated HCST. O-glycosylated. As to expression, predominantly expressed in hemopoietic cells such as NK cells, subset of T-cells and monocytes. Detected in leukocytes, spleen, and thymus.

The protein localises to the membrane. In terms of biological role, transmembrane adapter protein which associates with KLRK1 to form an activation receptor KLRK1-HCST in lymphoid and myeloid cells; this receptor plays a major role in triggering cytotoxicity against target cells expressing cell surface ligands such as MHC class I chain-related MICA and MICB, and UL16-binding proteins (ULBPs); these ligands are up-regulated by stress conditions and pathological state such as viral infection and tumor transformation. Functions as a docking site for PI3-kinase PIK3R1 and GRB2. Interaction of ULBPs with KLRK1-HCST triggers calcium mobilization and activation of the PIK3R1, MAP2K/ERK, and JAK2/STAT5 signaling pathways. Both PIK3R1 and GRB2 are required for full KLRK1-HCST-mediated activation and ultimate killing of target cells. In NK cells, KLRK1-HCST signaling directly induces cytotoxicity and enhances cytokine production initiated via DAP12/TYROBP-associated receptors. In T-cells, it provides primarily costimulation for TCR-induced signals. KLRK1-HCST receptor plays a role in immune surveillance against tumors and is required for cytolysis of tumors cells; indeed, melanoma cells that do not express KLRK1 ligands escape from immune surveillance mediated by NK cells. This is Hematopoietic cell signal transducer (HCST) from Homo sapiens (Human).